The primary structure comprises 361 residues: Spermidine/putrescine import ATP-binding protein PotA (361 aa).

Residues 4–234 (LEIKNVVKRF…PKNRFVADFL (231 aa)) form the ABC transporter domain. 36–43 (GPSGCGKT) is a binding site for ATP.

The protein belongs to the ABC transporter superfamily. Spermidine/putrescine importer (TC 3.A.1.11.1) family. In terms of assembly, the complex is composed of two ATP-binding proteins (PotA), two transmembrane proteins (PotB and PotC) and a solute-binding protein (PotD).

It localises to the cell inner membrane. The catalysed reaction is ATP + H2O + polyamine-[polyamine-binding protein]Side 1 = ADP + phosphate + polyamineSide 2 + [polyamine-binding protein]Side 1.. Functionally, part of the ABC transporter complex PotABCD involved in spermidine/putrescine import. Responsible for energy coupling to the transport system. This Chromobacterium violaceum (strain ATCC 12472 / DSM 30191 / JCM 1249 / CCUG 213 / NBRC 12614 / NCIMB 9131 / NCTC 9757 / MK) protein is Spermidine/putrescine import ATP-binding protein PotA.